Here is a 296-residue protein sequence, read N- to C-terminus: Thioredoxin-related transmembrane protein 2 (296 aa).

Residues Met-1–Gly-48 form the signal peptide. At Leu-49–Ala-102 the chain is on the extracellular side. The helical transmembrane segment at Ile-103–Met-125 threads the bilayer. The region spanning Leu-114–Lys-269 is the Thioredoxin domain. Topologically, residues Thr-126 to Lys-296 are cytoplasmic. Residues Ser-211, Ser-243, and Ser-288 each carry the phosphoserine modification. The tract at residues Lys-269–Lys-296 is disordered. A Di-lysine motif motif is present at residues Lys-293 to Lys-296.

In terms of assembly, monomer. Homodimer; disulfide-linked. Occurs in both reduced and oxidized monomeric form. Oxidative conditions increase homodimerization. Interacts with CANX. Interacts with ATP2A2.

It is found in the endoplasmic reticulum membrane. The protein resides in the mitochondrion membrane. Endoplasmic reticulum and mitochondria-associated protein that probably functions as a regulator of cellular redox state and thereby regulates protein post-translational modification, protein folding and mitochondrial activity. Indirectly regulates neuronal proliferation, migration, and organization in the developing brain. This is Thioredoxin-related transmembrane protein 2 (TMX2) from Macaca fascicularis (Crab-eating macaque).